The chain runs to 523 residues: FAD:protein FMN transferase (523 aa).

The next 3 membrane-spanning stretches (helical) occupy residues 88 to 108, 118 to 138, and 169 to 189; these read LLAG…VALA, GGAA…LVLL, and GLAL…TAPA. Residues 277–279 and D336 contribute to the FAD site; that span reads LFD. A339 is a binding site for Mg(2+). Residues K342 and 423-425 each bind FAD; that span reads HII. Mg(2+)-binding residues include D450 and T454.

In the N-terminal section; belongs to the RseC family. It in the C-terminal section; belongs to the ApbE family. Mg(2+) serves as cofactor.

It is found in the cell membrane. The enzyme catalyses L-threonyl-[protein] + FAD = FMN-L-threonyl-[protein] + AMP + H(+). Functionally, flavin transferase that catalyzes the transfer of the FMN moiety of FAD and its covalent binding to the hydroxyl group of a threonine residue in a target flavoprotein. Is likely involved in the modification of RnfG and RnfD. Required for nitrogen fixation. The chain is FAD:protein FMN transferase from Rhodobacter capsulatus (Rhodopseudomonas capsulata).